Reading from the N-terminus, the 510-residue chain is ATP synthase subunit alpha (510 aa).

Gly169–Thr176 is an ATP binding site.

Belongs to the ATPase alpha/beta chains family. F-type ATPases have 2 components, CF(1) - the catalytic core - and CF(0) - the membrane proton channel. CF(1) has five subunits: alpha(3), beta(3), gamma(1), delta(1), epsilon(1). CF(0) has three main subunits: a(1), b(2) and c(9-12). The alpha and beta chains form an alternating ring which encloses part of the gamma chain. CF(1) is attached to CF(0) by a central stalk formed by the gamma and epsilon chains, while a peripheral stalk is formed by the delta and b chains.

It localises to the cell inner membrane. It catalyses the reaction ATP + H2O + 4 H(+)(in) = ADP + phosphate + 5 H(+)(out). In terms of biological role, produces ATP from ADP in the presence of a proton gradient across the membrane. The alpha chain is a regulatory subunit. This chain is ATP synthase subunit alpha, found in Anaeromyxobacter dehalogenans (strain 2CP-1 / ATCC BAA-258).